Reading from the N-terminus, the 293-residue chain is MSALDNRLFAKMNGIGNEIVVVDLRDQPAPVTPADARAVAAHVPYDQLMLLQPARLSGTEAFVRIYNNDGSESGACGNGMRCVARQMFSGSEKNGLTFETRAGLLNCWRGPADGLYTVDMGEPKFGWQDIPLAEEFRDTRMIELQIGPIDAPVLHTPSVVSMGNPHAIFWVDDVNAYDLGRFGPLLENHPIFPERANITLAHIVDRQHITMRTWERGAGLTKACGSAACSTAVAAARLKRTDRTVEMTLPGGQLTIEWRESDNHVLMTGGAAFEFEGRFDPALFSGALDPTGA.

Positions 17, 47, and 67 each coordinate substrate. Cys76 acts as the Proton donor in catalysis. Substrate contacts are provided by residues 77 to 78 (GN), Asn164, Asn197, and 215 to 216 (ER). The Proton acceptor role is filled by Cys224. 225–226 (GS) is a binding site for substrate.

The protein belongs to the diaminopimelate epimerase family. Homodimer.

The protein resides in the cytoplasm. It catalyses the reaction (2S,6S)-2,6-diaminopimelate = meso-2,6-diaminopimelate. It functions in the pathway amino-acid biosynthesis; L-lysine biosynthesis via DAP pathway; DL-2,6-diaminopimelate from LL-2,6-diaminopimelate: step 1/1. Its function is as follows. Catalyzes the stereoinversion of LL-2,6-diaminopimelate (L,L-DAP) to meso-diaminopimelate (meso-DAP), a precursor of L-lysine and an essential component of the bacterial peptidoglycan. The protein is Diaminopimelate epimerase of Rhodopseudomonas palustris (strain ATCC BAA-98 / CGA009).